We begin with the raw amino-acid sequence, 284 residues long: Acetylglutamate kinase (284 aa).

Substrate is bound by residues 64–65, arginine 86, and asparagine 179; that span reads GG.

This sequence belongs to the acetylglutamate kinase family. ArgB subfamily.

Its subcellular location is the cytoplasm. It catalyses the reaction N-acetyl-L-glutamate + ATP = N-acetyl-L-glutamyl 5-phosphate + ADP. It functions in the pathway amino-acid biosynthesis; L-arginine biosynthesis; N(2)-acetyl-L-ornithine from L-glutamate: step 2/4. In terms of biological role, catalyzes the ATP-dependent phosphorylation of N-acetyl-L-glutamate. In Acaryochloris marina (strain MBIC 11017), this protein is Acetylglutamate kinase.